The primary structure comprises 134 residues: Z-ring associated protein G (134 aa).

A helical transmembrane segment spans residues 7–27 (EIWVAIGIAFIVGLFIGYIIV). The segment at 107–134 (ATDKSQNEQPRDYSEGASGLFKENKEEN) is disordered. The span at 111 to 120 (SQNEQPRDYS) shows a compositional bias: basic and acidic residues.

The protein belongs to the ZapG family.

It localises to the cell inner membrane. In terms of biological role, involved in cell division, cell envelope biogenesis and cell shape maintenance. This chain is Z-ring associated protein G, found in Haemophilus influenzae (strain ATCC 51907 / DSM 11121 / KW20 / Rd).